The sequence spans 297 residues: D-alanine--D-alanine ligase (297 aa).

The region spanning 95 to 294 is the ATP-grasp domain; it reads KMLWKAFGLP…FEQLVVKILE (200 aa). An ATP-binding site is contributed by 125 to 180; that stretch reads VAKLGLPLMVKPSLEGSSVGLTKVKAVEELKSAVEYALKFDNTILIEEWLAGDELT. Aspartate 248, glutamate 261, and asparagine 263 together coordinate Mg(2+).

Belongs to the D-alanine--D-alanine ligase family. The cofactor is Mg(2+). Mn(2+) serves as cofactor.

It localises to the cytoplasm. It catalyses the reaction 2 D-alanine + ATP = D-alanyl-D-alanine + ADP + phosphate + H(+). The protein operates within cell wall biogenesis; peptidoglycan biosynthesis. Functionally, cell wall formation. This is D-alanine--D-alanine ligase from Haemophilus influenzae (strain PittEE).